The following is a 557-amino-acid chain: Potassium-transporting ATPase potassium-binding subunit (557 aa).

12 helical membrane-spanning segments follow: residues 5–25 (GFLLIVTFLLVLMVLARPLGS), 63–83 (LSAILGLNMLGLAVLFFMLLG), 132–152 (GLTVQNFLSAASGIAVIFALI), 170–190 (LLRITLWVLAPVALLIALFFI), 253–273 (FVQMLAIFVIPTALCFAFGEV), 283–303 (LLWAMSVIFVICVGVVMWAEV), 329–349 (VLVSSLFAVVTTAASCGAVIA), 356–376 (ALGGMVPMWLMQIGEVVFGGV), 379–399 (GLYGMMLFVLLAVFIAGLMIG), 416–436 (LTALAILVTPTLVLMGAALAM), 484–504 (LLAFCMFVGRFGVIIPVMAIA), and 526–546 (LFVGLLIGTVLLVGALTFIPA).

The protein belongs to the KdpA family. The system is composed of three essential subunits: KdpA, KdpB and KdpC.

It is found in the cell inner membrane. Functionally, part of the high-affinity ATP-driven potassium transport (or Kdp) system, which catalyzes the hydrolysis of ATP coupled with the electrogenic transport of potassium into the cytoplasm. This subunit binds the periplasmic potassium ions and delivers the ions to the membrane domain of KdpB through an intramembrane tunnel. The polypeptide is Potassium-transporting ATPase potassium-binding subunit (Escherichia fergusonii (strain ATCC 35469 / DSM 13698 / CCUG 18766 / IAM 14443 / JCM 21226 / LMG 7866 / NBRC 102419 / NCTC 12128 / CDC 0568-73)).